The chain runs to 381 residues: Putative glutamate--cysteine ligase 2 (381 aa).

It belongs to the glutamate--cysteine ligase type 2 family. YbdK subfamily.

The enzyme catalyses L-cysteine + L-glutamate + ATP = gamma-L-glutamyl-L-cysteine + ADP + phosphate + H(+). Its function is as follows. ATP-dependent carboxylate-amine ligase which exhibits weak glutamate--cysteine ligase activity. The polypeptide is Putative glutamate--cysteine ligase 2 (Polaromonas naphthalenivorans (strain CJ2)).